The primary structure comprises 284 residues: RNase adapter protein RapZ (284 aa).

8-15 (GRSGSGKS) is a binding site for ATP. Position 56 to 59 (56 to 59 (DVRN)) interacts with GTP. The interval 266–284 (RSRGKNVQSRHRTLEKRKT) is RNA-binding.

This sequence belongs to the RapZ-like family. RapZ subfamily. Homotrimer.

Its function is as follows. Modulates the synthesis of GlmS, by affecting the processing and stability of the regulatory small RNA GlmZ. When glucosamine-6-phosphate (GlcN6P) concentrations are high in the cell, RapZ binds GlmZ and targets it to cleavage by RNase E. Consequently, GlmZ is inactivated and unable to activate GlmS synthesis. Under low GlcN6P concentrations, RapZ is sequestered and inactivated by an other regulatory small RNA, GlmY, preventing GlmZ degradation and leading to synthesis of GlmS. This chain is RNase adapter protein RapZ, found in Salmonella typhi.